A 115-amino-acid chain; its full sequence is Large ribosomal subunit protein bL20 (115 aa).

It belongs to the bacterial ribosomal protein bL20 family.

Binds directly to 23S ribosomal RNA and is necessary for the in vitro assembly process of the 50S ribosomal subunit. It is not involved in the protein synthesizing functions of that subunit. The polypeptide is Large ribosomal subunit protein bL20 (Microcystis aeruginosa (strain NIES-843 / IAM M-2473)).